The chain runs to 206 residues: Ribosomal RNA small subunit methyltransferase G (206 aa).

Residues glycine 74, leucine 79, 125 to 126 (VE), and arginine 140 each bind S-adenosyl-L-methionine.

The protein belongs to the methyltransferase superfamily. RNA methyltransferase RsmG family.

The protein resides in the cytoplasm. It catalyses the reaction guanosine(527) in 16S rRNA + S-adenosyl-L-methionine = N(7)-methylguanosine(527) in 16S rRNA + S-adenosyl-L-homocysteine. Specifically methylates the N7 position of guanine in position 527 of 16S rRNA. This Shewanella baltica (strain OS223) protein is Ribosomal RNA small subunit methyltransferase G.